The following is a 59-amino-acid chain: UPF0291 protein CPR_1073 (59 aa).

The segment at 1–30 (MNIDELTKRINELHKKHKEEGLSEDEHKER) is disordered.

It belongs to the UPF0291 family.

The protein localises to the cytoplasm. This is UPF0291 protein CPR_1073 from Clostridium perfringens (strain SM101 / Type A).